The following is a 923-amino-acid chain: RNA polymerase-associated protein RapA (923 aa).

The Helicase ATP-binding domain maps to 162–332 (EVGNRVNPRV…FARLRLLDPE (171 aa)). 175–182 (DEVGLGKT) is an ATP binding site. Residues 278 to 281 (DEAH) carry the DEAH box motif. Residues 443-597 (KIDWLIDFLK…TCPMGMALFS (155 aa)) enclose the Helicase C-terminal domain.

This sequence belongs to the SNF2/RAD54 helicase family. RapA subfamily. Interacts with the RNAP. Has a higher affinity for the core RNAP than for the holoenzyme. Its ATPase activity is stimulated by binding to RNAP.

Transcription regulator that activates transcription by stimulating RNA polymerase (RNAP) recycling in case of stress conditions such as supercoiled DNA or high salt concentrations. Probably acts by releasing the RNAP, when it is trapped or immobilized on tightly supercoiled DNA. Does not activate transcription on linear DNA. Probably not involved in DNA repair. This is RNA polymerase-associated protein RapA from Haemophilus influenzae (strain ATCC 51907 / DSM 11121 / KW20 / Rd).